The chain runs to 279 residues: 4-diphosphocytidyl-2-C-methyl-D-erythritol kinase (279 aa).

K11 is an active-site residue. 95–105 contacts ATP; that stretch reads PVAAGLGGGSS. D137 is an active-site residue.

The protein belongs to the GHMP kinase family. IspE subfamily.

It catalyses the reaction 4-CDP-2-C-methyl-D-erythritol + ATP = 4-CDP-2-C-methyl-D-erythritol 2-phosphate + ADP + H(+). Its pathway is isoprenoid biosynthesis; isopentenyl diphosphate biosynthesis via DXP pathway; isopentenyl diphosphate from 1-deoxy-D-xylulose 5-phosphate: step 3/6. In terms of biological role, catalyzes the phosphorylation of the position 2 hydroxy group of 4-diphosphocytidyl-2C-methyl-D-erythritol. The chain is 4-diphosphocytidyl-2-C-methyl-D-erythritol kinase from Geobacter sulfurreducens (strain ATCC 51573 / DSM 12127 / PCA).